Reading from the N-terminus, the 117-residue chain is Large ribosomal subunit protein bL19 (117 aa).

This sequence belongs to the bacterial ribosomal protein bL19 family.

Its function is as follows. This protein is located at the 30S-50S ribosomal subunit interface and may play a role in the structure and function of the aminoacyl-tRNA binding site. This is Large ribosomal subunit protein bL19 from Phocaeicola vulgatus (strain ATCC 8482 / DSM 1447 / JCM 5826 / CCUG 4940 / NBRC 14291 / NCTC 11154) (Bacteroides vulgatus).